The chain runs to 128 residues: Large ribosomal subunit protein bL12 (128 aa).

Belongs to the bacterial ribosomal protein bL12 family. In terms of assembly, homodimer. Part of the ribosomal stalk of the 50S ribosomal subunit. Forms a multimeric L10(L12)X complex, where L10 forms an elongated spine to which 2 to 4 L12 dimers bind in a sequential fashion. Binds GTP-bound translation factors.

In terms of biological role, forms part of the ribosomal stalk which helps the ribosome interact with GTP-bound translation factors. Is thus essential for accurate translation. The chain is Large ribosomal subunit protein bL12 from Synechococcus sp. (strain CC9902).